The primary structure comprises 325 residues: Replication factor C small subunit (325 aa).

An ATP-binding site is contributed by glycine 44–threonine 51.

It belongs to the activator 1 small subunits family. RfcS subfamily. In terms of assembly, heteromultimer composed of small subunits (RfcS) and large subunits (RfcL).

Its function is as follows. Part of the RFC clamp loader complex which loads the PCNA sliding clamp onto DNA. The sequence is that of Replication factor C small subunit from Thermofilum pendens (strain DSM 2475 / Hrk 5).